The primary structure comprises 556 residues: (S)-N-methylcanadine 1-hydroxylase CYP82Y1 (556 aa).

A helical membrane pass occupies residues 18–38 (TAVGTLILAFLLTLSPVIIYY). Cysteine 500 contributes to the heme binding site.

This sequence belongs to the cytochrome P450 family. Requires heme as cofactor. As to expression, highly expressed in capsules. Expressed is stems.

The protein resides in the membrane. It catalyses the reaction (S)-cis-N-methylcanadine + reduced [NADPH--hemoprotein reductase] + O2 = (S)-1-hydroxy-N-methylcanadine + oxidized [NADPH--hemoprotein reductase] + H2O + H(+). Its pathway is alkaloid biosynthesis. Cytochrome P450 involved in the biosynthesis of the benzylisoquinoline alkaloid noscapine. Converts (S)-N-methylcanadine to (S)-1-hydroxy-N-methylcanadine. The polypeptide is (S)-N-methylcanadine 1-hydroxylase CYP82Y1 (Papaver somniferum (Opium poppy)).